A 1194-amino-acid chain; its full sequence is Phosphatidylinositol-3,5-bisphosphate 3-phosphatase MTMR3 (1194 aa).

Ser-4 is subject to Phosphoserine. The region spanning 151–572 (EHVTSRFKNE…RNLMLWSAVY (422 aa)) is the Myotubularin phosphatase domain. The a 1,2-diacyl-sn-glycero-3-phospho-(1D-myo-inositol-3,5-bisphosphate) site is built by Asn-322, Asn-347, and Ile-348. Residues Asn-322, Asn-347, and Ile-348 each coordinate a 1,2-diacyl-sn-glycero-3-phospho-(1D-myo-inositol-3-phosphate). The active-site Phosphocysteine intermediate is the Cys-409. A 1,2-diacyl-sn-glycero-3-phospho-(1D-myo-inositol-3,5-bisphosphate)-binding residues include Ser-410, Asp-411, Gly-412, Trp-413, Asp-414, Arg-415, Lys-451, and Arg-455. Ser-410, Asp-411, Gly-412, Trp-413, Asp-414, and Arg-415 together coordinate a 1,2-diacyl-sn-glycero-3-phospho-(1D-myo-inositol-3-phosphate). Arg-455 contributes to the a 1,2-diacyl-sn-glycero-3-phospho-(1D-myo-inositol-3-phosphate) binding site. The disordered stretch occupies residues 583 to 609 (DDSCAPYPAPGTSPDEPPLSRLPKTRS). A compositionally biased stretch (pro residues) spans 589–599 (YPAPGTSPDEP). A phosphoserine mark is found at Ser-609, Ser-629, Ser-643, and Ser-647. The span at 693-724 (TKEESGVEEPTHREHTEVPEVKEEAPLAKESR) shows a compositional bias: basic and acidic residues. Disordered stretches follow at residues 693–731 (TKEESGVEEPTHREHTEVPEVKEEAPLAKESRTAAQGSG), 852–871 (ESGPQLHHRPCLASSGRFSG), and 876–897 (PIAPEPRSAERPQWDSVLHRTS). A Phosphothreonine modification is found at Thr-725. Ser-904 carries the phosphoserine modification. 2 disordered regions span residues 932–971 (NKASEQPAGFDTLQKYPTPNGHCANGETGRSKDSLSHQLS) and 988–1017 (KWLNSHSGRPSTTNSPEQPSRSHLDDDGMP). Positions 991–1006 (NSHSGRPSTTNSPEQP) are enriched in polar residues. The stretch at 1025–1058 (QRLRQIESGHQQEVETLKKQVQELKSRLESQYLT) forms a coiled coil. Phosphoserine is present on Ser-1060. The FYVE-type zinc-finger motif lies at 1115-1175 (DHLAAHCYAC…VCKSCYSSLH (61 aa)). The Zn(2+) site is built by Cys-1121, Cys-1124, Cys-1137, Cys-1140, Cys-1145, Cys-1148, Cys-1167, and Cys-1170.

The protein belongs to the protein-tyrosine phosphatase family. Non-receptor class myotubularin subfamily. As to quaternary structure, forms heterodimers with MTMR4 that recruit both CEP55 and PLK1; occurs during early mitosis, regulates the phosphorylation of CEP55 by PLK1 and its recruitment to the midbody where it mediates cell abscission.

The protein localises to the cytoplasm. Its subcellular location is the cytosol. The protein resides in the membrane. The catalysed reaction is a 1,2-diacyl-sn-glycero-3-phospho-(1D-myo-inositol-3,5-bisphosphate) + H2O = a 1,2-diacyl-sn-glycero-3-phospho-(1D-myo-inositol-5-phosphate) + phosphate. It catalyses the reaction a 1,2-diacyl-sn-glycero-3-phospho-(1D-myo-inositol-3-phosphate) + H2O = a 1,2-diacyl-sn-glycero-3-phospho-(1D-myo-inositol) + phosphate. The enzyme catalyses 1,2-dihexadecanoyl-sn-glycero-3-phospho-(1D-myo-inositol-3-phosphate) + H2O = 1,2-dihexadecanoyl-sn-glycero-3-phospho-(1D-myo-inositol) + phosphate. It carries out the reaction 1,2-dioctanoyl-sn-glycero-3-phospho-(1-D-myo-inositol-3-phosphate) + H2O = 1,2-dioctanoyl-sn-glycero-3-phospho-(1D-myo-inositol) + phosphate. The catalysed reaction is 1,2-dihexadecanoyl-sn-glycero-3-phospho-(1D-myo-inositol-3,5-phosphate) + H2O = 1,2-dihexadecanoyl-sn-glycero-3-phospho-(1D-myo-inositol-5-phosphate) + phosphate. Functionally, lipid phosphatase that specifically dephosphorylates the D-3 position of phosphatidylinositol 3-phosphate and phosphatidylinositol 3,5-bisphosphate, generating phosphatidylinositol and phosphatidylinositol 5-phosphate. Decreases the levels of phosphatidylinositol 3-phosphate, a phospholipid found in cell membranes where it acts as key regulator of both cell signaling and intracellular membrane traffic. Could also have a molecular sequestering/adapter activity and regulate biological processes independently of its phosphatase activity. It includes the regulation of midbody abscission during mitotic cytokinesis. This chain is Phosphatidylinositol-3,5-bisphosphate 3-phosphatase MTMR3, found in Rattus norvegicus (Rat).